We begin with the raw amino-acid sequence, 689 residues long: DNA ligase (689 aa).

Residues 40-44, 89-90, and Glu-122 each bind NAD(+); these read DQEYD and SL. Lys-124 serves as the catalytic N6-AMP-lysine intermediate. Residues Arg-145, Glu-182, Lys-300, and Lys-325 each coordinate NAD(+). Zn(2+)-binding residues include Cys-419, Cys-422, Cys-437, and Cys-442. Residues 600–689 form the BRCT domain; that stretch reads QADGVLTGAT…SADASADASA (90 aa).

The protein belongs to the NAD-dependent DNA ligase family. LigA subfamily. The cofactor is Mg(2+). Mn(2+) serves as cofactor.

The catalysed reaction is NAD(+) + (deoxyribonucleotide)n-3'-hydroxyl + 5'-phospho-(deoxyribonucleotide)m = (deoxyribonucleotide)n+m + AMP + beta-nicotinamide D-nucleotide.. Its function is as follows. DNA ligase that catalyzes the formation of phosphodiester linkages between 5'-phosphoryl and 3'-hydroxyl groups in double-stranded DNA using NAD as a coenzyme and as the energy source for the reaction. It is essential for DNA replication and repair of damaged DNA. In Gemmatimonas aurantiaca (strain DSM 14586 / JCM 11422 / NBRC 100505 / T-27), this protein is DNA ligase.